A 244-amino-acid polypeptide reads, in one-letter code: tRNA pseudouridine synthase B (244 aa).

D46 functions as the Nucleophile in the catalytic mechanism.

It belongs to the pseudouridine synthase TruB family. Type 1 subfamily.

The catalysed reaction is uridine(55) in tRNA = pseudouridine(55) in tRNA. Responsible for synthesis of pseudouridine from uracil-55 in the psi GC loop of transfer RNAs. This is tRNA pseudouridine synthase B from Bordetella avium (strain 197N).